The primary structure comprises 305 residues: Methionyl-tRNA formyltransferase (305 aa).

A (6S)-5,6,7,8-tetrahydrofolate-binding site is contributed by 111–114; that stretch reads SLLP.

It belongs to the Fmt family.

It carries out the reaction L-methionyl-tRNA(fMet) + (6R)-10-formyltetrahydrofolate = N-formyl-L-methionyl-tRNA(fMet) + (6S)-5,6,7,8-tetrahydrofolate + H(+). Its function is as follows. Attaches a formyl group to the free amino group of methionyl-tRNA(fMet). The formyl group appears to play a dual role in the initiator identity of N-formylmethionyl-tRNA by promoting its recognition by IF2 and preventing the misappropriation of this tRNA by the elongation apparatus. The polypeptide is Methionyl-tRNA formyltransferase (Campylobacter jejuni (strain RM1221)).